Reading from the N-terminus, the 455-residue chain is Golgi pH regulator (455 aa).

5 consecutive transmembrane segments (helical) span residues isoleucine 5 to phenylalanine 25, valine 46 to leucine 66, leucine 79 to valine 99, cysteine 114 to leucine 134, and valine 150 to proline 170. Asparagine 180 carries N-linked (GlcNAc...) asparagine glycosylation. Helical transmembrane passes span phenylalanine 288–isoleucine 308, isoleucine 343–leucine 363, valine 378–isoleucine 398, and tryptophan 425–histidine 445.

Belongs to the Golgi pH regulator (TC 1.A.38) family. As to quaternary structure, homotrimer. Interacts with RABL3; the interaction stabilizes GPR89.

Its subcellular location is the golgi apparatus membrane. It carries out the reaction iodide(out) = iodide(in). The enzyme catalyses chloride(in) = chloride(out). It catalyses the reaction bromide(in) = bromide(out). The catalysed reaction is fluoride(in) = fluoride(out). Its function is as follows. Voltage-gated channel that enables the transfer of monoatomic anions such as iodide, chloride, bromide and fluoride which may function in counter-ion conductance and participates in Golgi acidification. Plays a role in lymphocyte development, probably by acting as a RABL3 effector in hematopoietic cells. This Mus musculus (Mouse) protein is Golgi pH regulator.